The sequence spans 489 residues: uncharacterized protein (489 aa).

12 consecutive transmembrane segments (helical) span residues 14 to 34 (LLFVVNYIAGFGFIATAISLF), 36 to 56 (LGPFSWLIFLLVSLVSLIVTL), 100 to 120 (IIGPLSAATAPLFILNSFSGI), 127 to 147 (LVNTWILIAIGFSFYVLLAFI), 158 to 178 (LIALFASVKWIVILSALIVAI), 203 to 223 (EISFAQIATVFITFFYSYAGV), 241 to 261 (ILIVSFIAVFLFYFIGIIILN), 286 to 306 (AAGLGTLIFYGVGALFNNVST), 344 to 364 (IWFTFGTTLIAMTLLVFIPLV), 380 to 400 (VGSAATLLQYIFVFFIIFKFI), 419 to 439 (LFCLGTIVIVLMLLVYLFPVI), and 449 to 469 (HTLTIVLYGVLSLIGLVLFLL).

This sequence to M.genitalium MG226.

It localises to the cell membrane. This is an uncharacterized protein from Mycoplasma genitalium (strain ATCC 33530 / DSM 19775 / NCTC 10195 / G37) (Mycoplasmoides genitalium).